We begin with the raw amino-acid sequence, 164 residues long: Phosphatidyl-N-methylethanolamine N-methyltransferase (164 aa).

Residues 1-21 (MGLLAAIGVLLPFPFYWWLWT) constitute an intramembrane region (helical). Residues 22–30 (NAQSWVNLC) lie on the Lumenal side of the membrane. A helical membrane pass occupies residues 31 to 52 (GRERDPSTVMARVSHVLKAAQL). Topologically, residues 53-69 (LSLFSVASLSWPPPLYF) are cytoplasmic. The helical transmembrane segment at 70 to 90 (WPLMAFGQFLNFRVYQLLGEA) threads the bilayer. S-adenosyl-L-methionine is bound at residue 74–76 (AFG). The Lumenal portion of the chain corresponds to 91–131 (GTYYGVRFGKNIPWVTEFPFGVIRDPQYVGSIMSLLACLSW). Residues 132-151 (VPFQYILLWSLGYVFMMFLE) traverse the membrane as a helical segment. The Cytoplasmic portion of the chain corresponds to 152-164 (SKEDPNARAKSIS). 154-155 (ED) contributes to the S-adenosyl-L-methionine binding site.

The protein belongs to the class VI-like SAM-binding methyltransferase superfamily. PEMT/PEM2 methyltransferase family.

It localises to the endoplasmic reticulum membrane. It carries out the reaction a 1,2-diacyl-sn-glycero-3-phospho-N-methylethanolamine + S-adenosyl-L-methionine = a 1,2-diacyl-sn-glycero-3-phospho-N,N-dimethylethanolamine + S-adenosyl-L-homocysteine + H(+). The enzyme catalyses a 1,2-diacyl-sn-glycero-3-phospho-N,N-dimethylethanolamine + S-adenosyl-L-methionine = a 1,2-diacyl-sn-glycero-3-phosphocholine + S-adenosyl-L-homocysteine + H(+). It participates in phospholipid metabolism; phosphatidylcholine biosynthesis. Its function is as follows. Catalyzes the second two steps of the methylation pathway of phosphatidylcholine biosynthesis, the SAM-dependent methylation of phosphatidylmonomethylethanolamine (PMME) to phosphatidyldimethylethanolamine (PDME) and of PDME to phosphatidylcholine (PC). This Arabidopsis thaliana (Mouse-ear cress) protein is Phosphatidyl-N-methylethanolamine N-methyltransferase (PLMT).